Reading from the N-terminus, the 315-residue chain is 10-epi-cubebol synthase (315 aa).

Asp79, Asn220, Ser224, and Glu228 together coordinate Mg(2+). The DDXXD motif motif lies at 79-83 (DDVCE). The NXXXSXXXE motif signature appears at 220–228 (NDIYSLRKE).

The protein belongs to the terpene synthase family. Requires Mg(2+) as cofactor.

The enzyme catalyses (2E,6E)-farnesyl diphosphate + H2O = 10-epi-cubebol + diphosphate. In terms of biological role, catalyzes the cyclization of farnesyl diphosphate (FPP) to 10-epi-cubebol. Is also responsible for the formation of many other sesquiterpenes, mainly cadalanes and cubebanes, including 1,10-di-epi-cubebol and the cadalanes delta-cadinene, T-cadinol and alpha-cadinol. The protein is 10-epi-cubebol synthase of Sorangium cellulosum (strain So ce56) (Polyangium cellulosum (strain So ce56)).